The primary structure comprises 1489 residues: Chromatin-remodeling ATPase INO80 (1489 aa).

Phosphoserine occurs at positions 65, 115, and 133. Disordered regions lie at residues 137–311 (NEKD…KLSM) and 393–452 (KRER…GLPT). Composition is skewed to acidic residues over residues 140 to 164 (DADE…EDEA) and 214 to 291 (DENE…DFNP). Low complexity predominate over residues 301–311 (SSSSSSTKLSM). Residues 393–402 (KREREREEAL) show a composition bias toward basic and acidic residues. One can recognise a DBINO domain in the interval 476–601 (IWKDMARKDS…SHFIGRKIKT (126 aa)). Ser610 is modified (phosphoserine). One can recognise a Helicase ATP-binding domain in the interval 718 to 890 (ANLYDQGING…WALLHFIMPS (173 aa)). 731–738 (DEMGLGKT) lines the ATP pocket. Positions 841 to 844 (DEAQ) match the DEAQ box motif. In terms of domain architecture, Helicase C-terminal spans 1303-1467 (KLDELLVKLK…TIEVGENDSE (165 aa)). Residues 1456–1489 (IKTIEVGENDSEVTREGSKSISQDGIKEAASALA) are disordered.

This sequence belongs to the SNF2/RAD54 helicase family. Component of the chromatin-remodeling INO80 complex, at least composed of ARP4, ARP5, ARP8, RVB1, RVB2, TAF14, NHP10, IES1, IES3, IES4, IES6, ACT1, IES2, IES5 and INO80.

It is found in the nucleus. The enzyme catalyses ATP + H2O = ADP + phosphate + H(+). In terms of biological role, ATPase component of the INO80 complex which remodels chromatin by shifting nucleosomes and is involved in DNA repair. Its ability to induce transcription of some phosphate-responsive genes is modulated by inositol polyphosphates. The INO80 complex is involved in DNA repair by associating with 'Ser-129' phosphorylated H2A histones as a response to DNA damage. This chain is Chromatin-remodeling ATPase INO80 (INO80), found in Saccharomyces cerevisiae (strain ATCC 204508 / S288c) (Baker's yeast).